Reading from the N-terminus, the 779-residue chain is Phosphoribosylformylglycinamidine synthase subunit PurL (779 aa).

The active site involves histidine 52. Residues tyrosine 55 and lysine 94 each contribute to the ATP site. Glutamate 96 serves as a coordination point for Mg(2+). Substrate is bound by residues 97–100 (SHNH) and arginine 119. Histidine 98 functions as the Proton acceptor in the catalytic mechanism. Aspartate 120 contributes to the Mg(2+) binding site. Glutamine 243 contributes to the substrate binding site. Aspartate 271 contacts Mg(2+). 315–317 (ESQ) is a substrate binding site. 2 residues coordinate ATP: asparagine 523 and glycine 560. Asparagine 561 serves as a coordination point for Mg(2+). Serine 563 provides a ligand contact to substrate.

It belongs to the FGAMS family. As to quaternary structure, monomer. Part of the FGAM synthase complex composed of 1 PurL, 1 PurQ and 2 PurS subunits.

The protein localises to the cytoplasm. It carries out the reaction N(2)-formyl-N(1)-(5-phospho-beta-D-ribosyl)glycinamide + L-glutamine + ATP + H2O = 2-formamido-N(1)-(5-O-phospho-beta-D-ribosyl)acetamidine + L-glutamate + ADP + phosphate + H(+). It participates in purine metabolism; IMP biosynthesis via de novo pathway; 5-amino-1-(5-phospho-D-ribosyl)imidazole from N(2)-formyl-N(1)-(5-phospho-D-ribosyl)glycinamide: step 1/2. Part of the phosphoribosylformylglycinamidine synthase complex involved in the purines biosynthetic pathway. Catalyzes the ATP-dependent conversion of formylglycinamide ribonucleotide (FGAR) and glutamine to yield formylglycinamidine ribonucleotide (FGAM) and glutamate. The FGAM synthase complex is composed of three subunits. PurQ produces an ammonia molecule by converting glutamine to glutamate. PurL transfers the ammonia molecule to FGAR to form FGAM in an ATP-dependent manner. PurS interacts with PurQ and PurL and is thought to assist in the transfer of the ammonia molecule from PurQ to PurL. The protein is Phosphoribosylformylglycinamidine synthase subunit PurL of Prochlorococcus marinus (strain MIT 9312).